Here is a 172-residue protein sequence, read N- to C-terminus: R-phycocyanin beta chain (172 aa).

The (2R,3E)-phycoerythrobilin site is built by asparagine 35 and aspartate 39. (2R,3E)-phycocyanobilin is bound by residues asparagine 72, cysteine 82, and 84 to 85 (RD). Asparagine 72 is modified (N4-methylasparagine). (2R,3E)-phycoerythrobilin contacts are provided by residues 149 to 151 (PAG) and cysteine 153.

This sequence belongs to the phycobiliprotein family. Heterododecamer of 6 alpha and 6 beta chains. The basic functional unit of phycobiliproteins is a ring-shaped hexamer formed from two back-to-back trimers contacting via the alpha chain subunits. The trimers are composed of alpha/beta subunit heterodimers arranged around a three-fold axis of symmetry. The phycoerythrins also contain a gamma subunit which is located in the center of the hexamer. Post-translationally, contains one covalently linked phycocyanobilin chromophore and one covalently linked phycoerythrobilin chromophore.

The protein localises to the plastid. It is found in the chloroplast thylakoid membrane. Functionally, light-harvesting photosynthetic tetrapyrrole chromophore-protein from the phycobiliprotein complex (phycobilisome, PBS). Phycocyanin is the major phycobiliprotein in the PBS rod. The protein is R-phycocyanin beta chain (rpcB) of Polysiphonia urceolata (Red alga).